The primary structure comprises 938 residues: Breast cancer type 2 susceptibility protein homolog (938 aa).

Composition is skewed to basic and acidic residues over residues leucine 320–isoleucine 339 and asparagine 409–asparagine 425. Disordered regions lie at residues leucine 320–leucine 359 and asparagine 409–glutamine 434. 3 BRCA2 repeats span residues alanine 537–tyrosine 571, asparagine 638–alanine 672, and serine 713–alanine 747. The span at serine 870 to alanine 879 shows a compositional bias: polar residues. Residues serine 870 to tyrosine 938 form a disordered region. Positions alanine 898 to alanine 915 are enriched in basic and acidic residues. Positions lysine 926–tyrosine 938 are enriched in basic residues.

Interacts with Rad9 and spn-A/Rad51.

It localises to the nucleus. Its function is as follows. Involved in and required for double-strand break repair by meiotic and mitotic homologous recombination. During meiosis, has a dual role in the repair of meiotic double-stranded breaks and the efficient activation of the meiotic recombination checkpoint. The protein is Breast cancer type 2 susceptibility protein homolog of Drosophila sechellia (Fruit fly).